Consider the following 135-residue polypeptide: Aspartate 1-decarboxylase (135 aa).

Ser-25 acts as the Schiff-base intermediate with substrate; via pyruvic acid in catalysis. Position 25 is a pyruvic acid (Ser) (Ser-25). A substrate-binding site is contributed by Thr-57. Catalysis depends on Tyr-58, which acts as the Proton donor. A substrate-binding site is contributed by 73 to 75; sequence GSA.

This sequence belongs to the PanD family. As to quaternary structure, heterooctamer of four alpha and four beta subunits. It depends on pyruvate as a cofactor. In terms of processing, is synthesized initially as an inactive proenzyme, which is activated by self-cleavage at a specific serine bond to produce a beta-subunit with a hydroxyl group at its C-terminus and an alpha-subunit with a pyruvoyl group at its N-terminus.

It is found in the cytoplasm. The enzyme catalyses L-aspartate + H(+) = beta-alanine + CO2. Its pathway is cofactor biosynthesis; (R)-pantothenate biosynthesis; beta-alanine from L-aspartate: step 1/1. Catalyzes the pyruvoyl-dependent decarboxylation of aspartate to produce beta-alanine. This Albidiferax ferrireducens (strain ATCC BAA-621 / DSM 15236 / T118) (Rhodoferax ferrireducens) protein is Aspartate 1-decarboxylase.